Reading from the N-terminus, the 138-residue chain is Putative pre-16S rRNA nuclease (138 aa).

Belongs to the YqgF nuclease family.

The protein localises to the cytoplasm. Could be a nuclease involved in processing of the 5'-end of pre-16S rRNA. The chain is Putative pre-16S rRNA nuclease from Klebsiella pneumoniae subsp. pneumoniae (strain ATCC 700721 / MGH 78578).